The primary structure comprises 100 residues: Small ribosomal subunit protein uS14 (100 aa).

The protein belongs to the universal ribosomal protein uS14 family. As to quaternary structure, part of the 30S ribosomal subunit. Contacts proteins S3 and S10.

In terms of biological role, binds 16S rRNA, required for the assembly of 30S particles and may also be responsible for determining the conformation of the 16S rRNA at the A site. In Microcystis aeruginosa (strain NIES-843 / IAM M-2473), this protein is Small ribosomal subunit protein uS14.